The sequence spans 487 residues: Betaine aldehyde dehydrogenase (487 aa).

K(+) is bound by residues I27 and D93. 149-151 (GAW) is an NAD(+) binding site. The active-site Charge relay system is K161. Residues 175-178 (KPSE) and 228-231 (SVPT) each bind NAD(+). K(+) is bound at residue L243. Catalysis depends on E249, which acts as the Proton acceptor. The NAD(+) site is built by G251, C283, and E384. Residue C283 is the Nucleophile of the active site. C283 is modified (cysteine sulfenic acid (-SOH)). 2 residues coordinate K(+): K454 and G457. Residue E461 is the Charge relay system of the active site.

It belongs to the aldehyde dehydrogenase family. In terms of assembly, dimer of dimers. The cofactor is K(+).

It catalyses the reaction betaine aldehyde + NAD(+) + H2O = glycine betaine + NADH + 2 H(+). The protein operates within amine and polyamine biosynthesis; betaine biosynthesis via choline pathway; betaine from betaine aldehyde: step 1/1. Involved in the biosynthesis of the osmoprotectant glycine betaine. Catalyzes the irreversible oxidation of betaine aldehyde to the corresponding acid. The protein is Betaine aldehyde dehydrogenase of Brucella anthropi (strain ATCC 49188 / DSM 6882 / CCUG 24695 / JCM 21032 / LMG 3331 / NBRC 15819 / NCTC 12168 / Alc 37) (Ochrobactrum anthropi).